Consider the following 488-residue polypeptide: Cysteine desulfurase, mitochondrial (488 aa).

The disordered stretch occupies residues Leu-25–His-52. The span at Ala-30–Lys-47 shows a compositional bias: polar residues. Pyridoxal 5'-phosphate-binding positions include Ala-157–Thr-158, Asn-237, Gln-265, and Ser-285–His-287. Lys-288 bears the N6-(pyridoxal phosphate)lysine mark. Thr-325 lines the pyridoxal 5'-phosphate pocket. Cys-412 acts as the Cysteine persulfide intermediate in catalysis. [2Fe-2S] cluster is bound at residue Cys-412.

The protein belongs to the class-V pyridoxal-phosphate-dependent aminotransferase family. NifS/IscS subfamily. The cofactor is pyridoxal 5'-phosphate.

The protein localises to the mitochondrion. The catalysed reaction is (sulfur carrier)-H + L-cysteine = (sulfur carrier)-SH + L-alanine. In terms of biological role, catalyzes the removal of elemental sulfur from cysteine to produce alanine. It supplies the inorganic sulfur for iron-sulfur (Fe-S) clusters. Plays a role in both tRNA-processing and mitochondrial metabolism. Involved in the 2-thio-modification of both 5-carboxymethylaminomethyl-2-thiouridine in mitochondrial tRNAs and 5-methoxycarbonylmethyl-2-thiouridine (mcm5s2U) in cytoplasmic tRNAs. The sequence is that of Cysteine desulfurase, mitochondrial (NFS1) from Candida albicans (strain SC5314 / ATCC MYA-2876) (Yeast).